The sequence spans 364 residues: Popeye domain-containing protein 2 (364 aa).

Asparagine 4 is a glycosylation site (N-linked (GlcNAc...) asparagine). 2 helical membrane-spanning segments follow: residues leucine 37–leucine 57 and isoleucine 77–tyrosine 97. The tract at residues alanine 276 to serine 333 is disordered. Positions threonine 300–proline 309 are enriched in polar residues. Threonine 361 carries the post-translational modification Phosphothreonine.

The protein belongs to the popeye family. In terms of tissue distribution, expressed predominantly in the heart and in the skeletal muscle.

The protein localises to the membrane. The protein resides in the cell membrane. It is found in the sarcolemma. Its function is as follows. Important for the maintenance of cardiac function. Plays a regulatory function in heart rate dynamics mediated, at least in part, through cAMP-binding and, probably, by increasing cell surface expression of the potassium channel KCNK2 and enhancing current density. The chain is Popeye domain-containing protein 2 (POPDC2) from Homo sapiens (Human).